We begin with the raw amino-acid sequence, 173 residues long: Alkyl hydroperoxide reductase AhpD (173 aa).

Residue C131 is the Proton donor of the active site. C131 and C134 form a disulfide bridge. C134 (cysteine sulfenic acid (-SOH) intermediate) is an active-site residue.

Belongs to the AhpD family.

It catalyses the reaction N(6)-[(R)-dihydrolipoyl]-L-lysyl-[lipoyl-carrier protein] + a hydroperoxide = N(6)-[(R)-lipoyl]-L-lysyl-[lipoyl-carrier protein] + an alcohol + H2O. Functionally, antioxidant protein with alkyl hydroperoxidase activity. Required for the reduction of the AhpC active site cysteine residues and for the regeneration of the AhpC enzyme activity. The sequence is that of Alkyl hydroperoxide reductase AhpD from Maricaulis maris (strain MCS10) (Caulobacter maris).